Consider the following 86-residue polypeptide: Acyl carrier protein (86 aa).

Residues 2 to 82 form the Carrier domain; that stretch reads ATVFERVKKV…AVVDYLKSKG (81 aa). Position 37 is an O-(pantetheine 4'-phosphoryl)serine (Ser-37).

It belongs to the acyl carrier protein (ACP) family. In terms of processing, 4'-phosphopantetheine is transferred from CoA to a specific serine of apo-ACP by AcpS. This modification is essential for activity because fatty acids are bound in thioester linkage to the sulfhydryl of the prosthetic group.

Its subcellular location is the cytoplasm. It functions in the pathway lipid metabolism; fatty acid biosynthesis. Its function is as follows. Carrier of the growing fatty acid chain in fatty acid biosynthesis. In Dehalococcoides mccartyi (strain ATCC BAA-2266 / KCTC 15142 / 195) (Dehalococcoides ethenogenes (strain 195)), this protein is Acyl carrier protein.